A 440-amino-acid polypeptide reads, in one-letter code: Nitrilase and fragile histidine triad fusion protein NitFhit (440 aa).

The CN hydrolase domain occupies 14–264 (RHFIAVCQMT…VDMCFAEIDL (251 aa)). Active-site residues include Glu54, Lys127, and Cys169. An HIT domain is found at 297–405 (GGLKFARFNI…LPRRAGDFGD (109 aa)). Positions 390 to 394 (HVHIH) match the Histidine triad motif motif. The active-site Tele-AMP-histidine intermediate is the His392.

It in the N-terminal section; belongs to the UPF0012 family. As to quaternary structure, homotetramer. Requires Mn(2+) as cofactor.

It catalyses the reaction P(1),P(3)-bis(5'-adenosyl) triphosphate + H2O = AMP + ADP + 2 H(+). Functionally, cleaves A-5'-PPP-5'A to yield AMP and ADP. The protein is Nitrilase and fragile histidine triad fusion protein NitFhit of Caenorhabditis elegans.